We begin with the raw amino-acid sequence, 673 residues long: Xaa-Pro aminopeptidase 2 (673 aa).

The first 21 residues, 1 to 21 (MAQACWGCYPWLVLICACAWG), serve as a signal peptide directing secretion. Residues Asn34, Asn48, and Asn64 are each glycosylated (N-linked (GlcNAc...) asparagine). Arg115 contributes to the substrate binding site. Residues Asn277, Asn290, and Asn294 are each glycosylated (N-linked (GlcNAc...) asparagine). Residue His429 coordinates substrate. Asp449 contacts Mn(2+). Residues Asp449, Asp460, and His523 each contribute to the Zn(2+) site. Substrate contacts are provided by His523, His532, and Glu554. Positions 554 and 568 each coordinate Zn(2+). The GPI-anchor amidated alanine moiety is linked to residue Ala649. Positions 650 to 673 (RAAPTTSLGSLMTVSALAILGWSV) are cleaved as a propeptide — removed in mature form.

This sequence belongs to the peptidase M24B family. As to quaternary structure, homotrimer. Requires Zn(2+) as cofactor. Post-translationally, N-glycosylated. Kidney.

Its subcellular location is the cell membrane. The catalysed reaction is Release of any N-terminal amino acid, including proline, that is linked to proline, even from a dipeptide or tripeptide.. Its activity is regulated as follows. Inhibited by apstatin and the metal ion chelator EDTA. Potently inhibited by the converting enzyme inhibitors cilazaprilat; enalaprilat; L155,212; ramiprilat and YS 980. Also inhibited to a lesser extent by indolaprilat; quinaprilat; spiraprilat; captopril and zofenoprilat. Its function is as follows. Membrane-bound metalloprotease which catalyzes the removal of a penultimate prolyl residue from the N-termini of peptides, such as Arg-Pro-Pro. May play a role in the metabolism of the vasodilator bradykinin. The chain is Xaa-Pro aminopeptidase 2 (XPNPEP2) from Sus scrofa (Pig).